A 469-amino-acid chain; its full sequence is Glutamate--tRNA ligase (469 aa).

Residues 9–19 carry the 'HIGH' region motif; sequence PSPTGFLHVGG. Zn(2+) is bound by residues Cys-98, Cys-100, Cys-125, and Asp-127. Positions 236-240 match the 'KMSKS' region motif; it reads KLSKR. An ATP-binding site is contributed by Lys-239.

This sequence belongs to the class-I aminoacyl-tRNA synthetase family. Glutamate--tRNA ligase type 1 subfamily. Monomer. The cofactor is Zn(2+).

It localises to the cytoplasm. The catalysed reaction is tRNA(Glu) + L-glutamate + ATP = L-glutamyl-tRNA(Glu) + AMP + diphosphate. In terms of biological role, catalyzes the attachment of glutamate to tRNA(Glu) in a two-step reaction: glutamate is first activated by ATP to form Glu-AMP and then transferred to the acceptor end of tRNA(Glu). This chain is Glutamate--tRNA ligase, found in Shewanella putrefaciens (strain CN-32 / ATCC BAA-453).